The primary structure comprises 1040 residues: Exosome RNA helicase MTR4 (1040 aa).

Position 2 is an N-acetylalanine (alanine 2). The interval 16 to 77 (DSTSAAGAKK…GTDEPIFGKK (62 aa)) is disordered. Over residues 23–33 (AKKDKEKEKWK) the composition is skewed to basic and acidic residues. Lysine 24 participates in a covalent cross-link: Glycyl lysine isopeptide (Lys-Gly) (interchain with G-Cter in SUMO2). Serine 38 is modified (phosphoserine). Residues 41–50 (KAGKRLDTKL) show a composition bias toward basic and acidic residues. 2 positions are modified to N6-acetyllysine: lysine 49 and lysine 76. ATP-binding positions include isoleucine 137, 159 to 166 (AHTSAGKT), serine 162, glycine 164, lysine 165, and threonine 166. The Helicase ATP-binding domain maps to 146–302 (IQCVDNNQSV…WICHLHKQPC (157 aa)). The DEIH box signature appears at 250 to 253 (DEIH). Residue lysine 356 forms a Glycyl lysine isopeptide (Lys-Gly) (interchain with G-Cter in SUMO2) linkage. The 173-residue stretch at 403 to 575 (QMTKLDFNTD…NMVLNLLRVE (173 aa)) folds into the Helicase C-terminal domain. Residues lysine 682 and lysine 721 each participate in a glycyl lysine isopeptide (Lys-Gly) (interchain with G-Cter in SUMO2) cross-link.

This sequence belongs to the helicase family. SKI2 subfamily. Component of a TRAMP-like complex, an ATP-dependent exosome regulatory complex consisting of a helicase (MTREX), an oligadenylate polymerase (TENT4B or TENT4A), and a substrate specific RNA-binding factor (ZCCHC7 or ZCCHC8). Several TRAMP-like complexes exist with specific compositions and are associated with nuclear, or nucleolar RNA exosomes. Identified in the spliceosome C complex. Component of the poly(A) tail exosome targeting (PAXT) complex made of PABPN1, ZFC3H1 and MTREX that directs a subset of long and polyadenylated poly(A) RNAs for exosomal degradation. Component of the nuclear exosome targeting (NEXT) complex composed of MTREX, ZCCHC8, and RBM7 that directs a subset of non-coding short-lived RNAs for exosomal degradation. Interacts with ZCCHC8; this interaction bridges the interaction between RBM7 and MTREX. Binds to ZFC3H1 and RBM7 in a RNase-insensitive manner. Interacts with EXOSC10; the interaction mediates the association of MTREX with nuclear RNA exosomes. Interacts with isoform 1 of NVL in an ATP-dependent manner; the interaction is required to associate NVL with nuclear RNA exosome. Interacts with WDR74; the interaction dissociation in a late stage of rRNA synthesis is required for appropriate maturation of pre-60S particles and depends on the ATPase activity of NVL. Interacts with MPHOSPH6. Interacts with the RNA cap-binding complex proteins NCBP1 and SRRT. Interacts with NRDE2; the interaction is direct and negatively regulates MTREX function in exosomal degradation by changing its conformation precluding interaction with ZFC3H1, the RNA cap-binding complex proteins NCBP1 and SRRT, and association with the exosome. Associates with the RNA exosome complex.

Its subcellular location is the nucleus. It is found in the nucleoplasm. It localises to the nucleolus. The protein resides in the nucleus speckle. The catalysed reaction is ATP + H2O = ADP + phosphate + H(+). Activated when MTREX is incorporated into NEXT complex an the nuclear RNA exosome complex. In terms of biological role, catalyzes the ATP-dependent unwinding of RNA duplexes with a single-stranded 3' RNA extension. Central subunit of many protein complexes, namely TRAMP-like, nuclear exosome targeting (NEXT) and poly(A) tail exosome targeting (PAXT). NEXT functions as an RNA exosome cofactor that directs a subset of non-coding short-lived RNAs for exosomal degradation. NEXT is involved in surveillance and turnover of aberrant transcripts and non-coding RNAs. PAXT directs a subset of long and polyadenylated poly(A) RNAs for exosomal degradation. The RNA exosome is fundamental for the degradation of RNA in eukaryotic nuclei. Substrate targeting is facilitated by its cofactor ZCCHC8, which links to RNA-binding protein adapters. Associated with the RNA exosome complex and involved in the 3'-processing of the 7S pre-RNA to the mature 5.8S rRNA. May be involved in pre-mRNA splicing. In the context of NEXT complex can also in vitro unwind DNA:RNA heteroduplexes with a 3' poly (A) RNA tracking strand. Can promote unwinding and degradation of structured RNA substrates when associated with the nuclear exosome and its cofactors. Can displace a DNA strand while translocating on RNA to ultimately degrade the RNA within a DNA/RNA heteroduplex. Plays a role in DNA damage response. This is Exosome RNA helicase MTR4 from Mus musculus (Mouse).